A 55-amino-acid chain; its full sequence is Riparin-1.4 (55 aa).

Residues 1–15 (MKIIVVLAVLMLVSA) form the signal peptide. Positions 16–41 (QVCLVSAAEMGHSSDNELSSRDLVKR) are excised as a propeptide. Cysteines 47 and 53 form a disulfide. Positions 54–55 (NH) are excised as a propeptide.

Expressed by the skin glands.

The protein localises to the secreted. This chain is Riparin-1.4, found in Crinia riparia (Streambank froglet).